Consider the following 154-residue polypeptide: Small ribosomal subunit protein uS11c (154 aa).

Belongs to the universal ribosomal protein uS11 family. In terms of assembly, part of the 30S ribosomal subunit.

Its subcellular location is the plastid. The polypeptide is Small ribosomal subunit protein uS11c (Helicosporidium sp. subsp. Simulium jonesii (Green alga)).